The chain runs to 365 residues: MAKQTPLYDQHVACGARMVDFHGWMMPLHYGSQIDEHHFVRQDAGMFDVSHMTIVDLHGNRTREFLRYLLANDVAKLTQPGKALYTGMLNESGGVIDDLIVYFLSEDYFRLVVNSATRDKDLAWISQHAEPYQVEVTVRDDLALIAVQGPQAQQKVATLLTTEQQQAIAGMKPFFGIQTGDLFIATTGYTGEAGYEIALPKQQVVAFWQQLLAAGVKPAGLGARDTLRLEAGMNLYGQEMDEKTSPLAANMGWTVAWQPEDRQFIGRAALERQRMKGTEQLVGLIMTEKGVLRNELPVYFFDAAGNQHVGVITSGSFSPTLGFSIALARVPAGIGEHAVVQIRNREMPVRVTKPGFVRAGKAIVL.

Belongs to the GcvT family. The glycine cleavage system is composed of four proteins: P, T, L and H.

The catalysed reaction is N(6)-[(R)-S(8)-aminomethyldihydrolipoyl]-L-lysyl-[protein] + (6S)-5,6,7,8-tetrahydrofolate = N(6)-[(R)-dihydrolipoyl]-L-lysyl-[protein] + (6R)-5,10-methylene-5,6,7,8-tetrahydrofolate + NH4(+). Its function is as follows. The glycine cleavage system catalyzes the degradation of glycine. This chain is Aminomethyltransferase, found in Yersinia pestis bv. Antiqua (strain Antiqua).